The chain runs to 121 residues: UPF0102 protein Mvan_2202 (121 aa).

Belongs to the UPF0102 family.

The sequence is that of UPF0102 protein Mvan_2202 from Mycolicibacterium vanbaalenii (strain DSM 7251 / JCM 13017 / BCRC 16820 / KCTC 9966 / NRRL B-24157 / PYR-1) (Mycobacterium vanbaalenii).